Consider the following 256-residue polypeptide: Thiazole synthase (256 aa).

Catalysis depends on Lys98, which acts as the Schiff-base intermediate with DXP. Residues Gly159, 185–186, and 207–208 contribute to the 1-deoxy-D-xylulose 5-phosphate site; these read AG and NT.

This sequence belongs to the ThiG family. Homotetramer. Forms heterodimers with either ThiH or ThiS.

It is found in the cytoplasm. It catalyses the reaction [ThiS sulfur-carrier protein]-C-terminal-Gly-aminoethanethioate + 2-iminoacetate + 1-deoxy-D-xylulose 5-phosphate = [ThiS sulfur-carrier protein]-C-terminal Gly-Gly + 2-[(2R,5Z)-2-carboxy-4-methylthiazol-5(2H)-ylidene]ethyl phosphate + 2 H2O + H(+). It functions in the pathway cofactor biosynthesis; thiamine diphosphate biosynthesis. Catalyzes the rearrangement of 1-deoxy-D-xylulose 5-phosphate (DXP) to produce the thiazole phosphate moiety of thiamine. Sulfur is provided by the thiocarboxylate moiety of the carrier protein ThiS. In vitro, sulfur can be provided by H(2)S. This Aliivibrio fischeri (strain MJ11) (Vibrio fischeri) protein is Thiazole synthase.